The primary structure comprises 280 residues: Shikimate dehydrogenase (NADP(+)) (280 aa).

Residues 20 to 22 and Thr-67 each bind shikimate; that span reads SLS. Lys-71 functions as the Proton acceptor in the catalytic mechanism. Shikimate-binding residues include Asn-92 and Asp-107. NADP(+) is bound by residues 131-135 and Gly-220; that span reads GAGGA. Tyr-222 is a shikimate binding site. Gly-243 contributes to the NADP(+) binding site.

Belongs to the shikimate dehydrogenase family. Homodimer.

It carries out the reaction shikimate + NADP(+) = 3-dehydroshikimate + NADPH + H(+). Its pathway is metabolic intermediate biosynthesis; chorismate biosynthesis; chorismate from D-erythrose 4-phosphate and phosphoenolpyruvate: step 4/7. Its function is as follows. Involved in the biosynthesis of the chorismate, which leads to the biosynthesis of aromatic amino acids. Catalyzes the reversible NADPH linked reduction of 3-dehydroshikimate (DHSA) to yield shikimate (SA). The sequence is that of Shikimate dehydrogenase (NADP(+)) from Maricaulis maris (strain MCS10) (Caulobacter maris).